Here is a 330-residue protein sequence, read N- to C-terminus: MPRSFLVKSKKAHTYHQPRVQEDEPLWPPALTPVPRDQAPSNSPVLSTLFPNQCLDWTNLKREPELEQDQNLARMAPAPEGPIVLSRPQDGDSPLSDSPPFYKPSFSWDTLATTYGHSYRQAPSTMQSAFLEHSVSLYGSPLVPSTEPALDFSLRYSPGMDAYHCVKCNKVFSTPHGLEVHVRRSHSGTRPFACDICGKTFGHAVSLEQHTHVHSQERSFECRMCGKAFKRSSTLSTHLLIHSDTRPYPCQFCGKRFHQKSDMKKHTYIHTGEKPHKCQVCGKAFSQSSNLITHSRKHTGFKPFSCELCTKGFQRKVDLRRHRESQHNLK.

Residues 1-20 (MPRSFLVKSKKAHTYHQPRV) form an SNAG domain region. The disordered stretch occupies residues 1–42 (MPRSFLVKSKKAHTYHQPRVQEDEPLWPPALTPVPRDQAPSN). Lysine 8 carries the N6,N6-dimethyllysine modification. The interaction with ARIH2 stretch occupies residues 91–330 (GDSPLSDSPP…RHRESQHNLK (240 aa)). 6 consecutive C2H2-type zinc fingers follow at residues 163–186 (YHCVKCNKVFSTPHGLEVHVRRSH), 192–214 (FACDICGKTFGHAVSLEQHTHVH), 220–242 (FECRMCGKAFKRSSTLSTHLLIH), 248–270 (YPCQFCGKRFHQKSDMKKHTYIH), 276–298 (HKCQVCGKAFSQSSNLITHSRKH), and 304–327 (FSCELCTKGFQRKVDLRRHRESQH). The interval 164-330 (HCVKCNKVFS…RHRESQHNLK (167 aa)) is mediates interaction with GATA1.

As to quaternary structure, component of a RCOR-GFI-KDM1A-HDAC complex. Interacts directly with RCOR1, KDM1A and HDAC2. Forms a complex with GATA1. Interacts with histone methyltransferases EHMT2 and SUV39H1. Interacts with ARIH2 (via RING-type 2). Interacts with RUNX1T1. Post-translationally, methylation at Lys-8 in the SNAG domain seems required for the recruitment of the corepressor complex. In terms of tissue distribution, expressed in bone marrow and fetal liver, but also detectable in fetal spleen, fetal thymus, and testes. Detected in hematopoietic stem cells, erythroblasts, and megakaryocytes. Overexpressed in bone marrow of patients with erythroleukemia and megakaryocytic leukemia as well as in their corresponding leukemic cell lines, and markedly repressed in severe aplastic anemia (SAA).

It is found in the nucleus. Its function is as follows. Essential proto-oncogenic transcriptional regulator necessary for development and differentiation of erythroid and megakaryocytic lineages. Component of a RCOR-GFI-KDM1A-HDAC complex that suppresses, via histone deacetylase (HDAC) recruitment, a number of genes implicated in multilineage blood cell development and controls hematopoietic differentiation. Transcriptional repressor or activator depending on both promoter and cell type context; represses promoter activity of SOCS1 and SOCS3 and thus, may regulate cytokine signaling pathways. Cooperates with GATA1 to repress target gene transcription, such as the apoptosis regulator BCL2L1; GFI1B silencing in leukemic cell lines markedly increase apoptosis rate. Inhibits down-regulation of MYC and MYB as well as the cyclin-dependent kinase inhibitor CDKN1A/P21WAF1 in IL6-treated myelomonocytic cells. Represses expression of GATA3 in T-cell lymphomas and inhibits GATA1-mediated transcription; as GATA1 also mediates erythroid GFI1B transcription, both GATA1 and GFI1B participate in a feedback regulatory pathway controlling the expression of GFI1B gene in erythroid cells. Suppresses GATA1-mediated stimulation of GFI1B promoter through protein interaction. Binds to gamma-satellite DNA and to its own promoter, auto-repressing its own expression. Alters histone methylation by recruiting histone methyltransferase to target genes promoters. Plays a role in heterochromatin formation. This Homo sapiens (Human) protein is Zinc finger protein Gfi-1b (GFI1B).